The primary structure comprises 59 residues: UPF0337 protein MM_2677 (59 aa).

Composition is skewed to basic and acidic residues over residues 1–24 and 33–59; these read MKEGTKEEMEGKFSKAKGEIKESA and MEAKGEAEKRKGEAQEKVGKIRKEFEK. The segment at 1–59 is disordered; the sequence is MKEGTKEEMEGKFSKAKGEIKESAGEMTGDIEMEAKGEAEKRKGEAQEKVGKIRKEFEK.

This sequence belongs to the UPF0337 (CsbD) family.

This is UPF0337 protein MM_2677 from Methanosarcina mazei (strain ATCC BAA-159 / DSM 3647 / Goe1 / Go1 / JCM 11833 / OCM 88) (Methanosarcina frisia).